A 240-amino-acid chain; its full sequence is Protein unc-119 homolog A (240 aa).

The span at 1-12 shows a compositional bias: gly residues; sequence MKVKKGGGGTGS. Residues 1-62 form a disordered region; the sequence is MKVKKGGGGT…PLQGKQPIGP (62 aa). A phosphoserine; by CK2 mark is found at serine 37, serine 39, and serine 41. Tyrosine 131 serves as a coordination point for tetradecanoate.

Belongs to the PDE6D/unc-119 family. In terms of assembly, may interact with GTP-bound ARL1. Interacts with ARL2 and ARL3 (GTP-bound forms); this promotes the release of myristoylated cargo proteins. Found in a complex with ARL3, RP2 and UNC119; RP2 induces hydrolysis of GTP ARL3 in the complex, leading to the release of UNC119. Interacts with NPHP3 (when myristoylated). Interacts with CYS1 (when myristoylated). Interacts with MACIR; interaction only takes place when UNC119 is not liganded with myristoylated proteins. Interacts with CABP4; in the absence of calcium. Interacts with DNM1; leading to a decrease of DNM1 GTPase activity. Interacts with LCK; this interaction plays a crucial role in activation of LCK. Interacts with FYN. Interacts with RAB11A; in a cell cycle-dependent manner. Interacts with LYN (via SH2 and SH3 domains); leading to LYN activation. Found in a complex with ABL1, ABL2, CRK and UNC119; leading to the inhibition of CRK phosphorylation by ABL kinases. Interacts with CD44. Interacts with KLHL18 (via kelch repeats). Interacts with PPP3CA, PPP3CB and PPP3CC. Interacts with USP48; this interaction promotes UNC119 stability. Post-translationally, phosphorylation suppresses its interaction with KLHL18 and down-regulates its KLHL18-mediated degradation. Phosphorylated more under light conditions than dark conditions. Dephosphorylated by calcineurin. As to expression, localized in photoreceptor synapses in the outer plexiform layer of the retina.

It is found in the cytoplasm. The protein localises to the cytoskeleton. The protein resides in the microtubule organizing center. It localises to the centrosome. Its subcellular location is the spindle. It is found in the spindle pole. Its function is as follows. Involved in synaptic functions in photoreceptor cells, the signal transduction in immune cells as a Src family kinase activator, endosome recycling, the uptake of bacteria and endocytosis, protein trafficking in sensory neurons and as lipid-binding chaperone with specificity for a diverse subset of myristoylated proteins. Specifically binds the myristoyl moiety of a subset of N-terminally myristoylated proteins and is required for their localization. Binds myristoylated GNAT1 and is required for G-protein localization and trafficking in sensory neurons. Probably plays a role in trafficking proteins in photoreceptor cells. Plays important roles in mediating Src family kinase signals for the completion of cytokinesis via RAB11A. The polypeptide is Protein unc-119 homolog A (Unc119) (Mus musculus (Mouse)).